We begin with the raw amino-acid sequence, 615 residues long: Elongation factor 4 (615 aa).

In terms of domain architecture, tr-type G spans 17–198; the sequence is ASIRNFCIIA…RVSRTIPAPV (182 aa). GTP contacts are provided by residues 29–34 and 145–148; these read DHGKST and NKID.

Belongs to the TRAFAC class translation factor GTPase superfamily. Classic translation factor GTPase family. LepA subfamily.

Its subcellular location is the cell membrane. It carries out the reaction GTP + H2O = GDP + phosphate + H(+). Functionally, required for accurate and efficient protein synthesis under certain stress conditions. May act as a fidelity factor of the translation reaction, by catalyzing a one-codon backward translocation of tRNAs on improperly translocated ribosomes. Back-translocation proceeds from a post-translocation (POST) complex to a pre-translocation (PRE) complex, thus giving elongation factor G a second chance to translocate the tRNAs correctly. Binds to ribosomes in a GTP-dependent manner. The chain is Elongation factor 4 from Clavibacter sepedonicus (Clavibacter michiganensis subsp. sepedonicus).